Here is a 63-residue protein sequence, read N- to C-terminus: Metallothionein-1 (63 aa).

2 consecutive repeats follow at residues 23–30 and 56–63; these read CGDKCECK.

The protein belongs to the metallothionein superfamily. Type 9 family.

The metallothioneins are involved in the cellular sequestration of toxic metal ions. In Candida glabrata (strain ATCC 2001 / BCRC 20586 / JCM 3761 / NBRC 0622 / NRRL Y-65 / CBS 138) (Yeast), this protein is Metallothionein-1 (MT-I).